The chain runs to 506 residues: H/ACA ribonucleoprotein complex subunit DKC1 (506 aa).

Residues 1-26 (MADTESKKEKKRKSKKISDEEVGDIQ) form a disordered region. Asp-120 functions as the Nucleophile in the catalytic mechanism. A PUA domain is found at 291–366 (HKRIVMKDSA…VVAKIKRVIM (76 aa)). Disordered regions lie at residues 391–410 (GLLD…WKEG) and 419–506 (VKKG…ADSD). The span at 421 to 434 (KGGEASAKRKRDES) shows a compositional bias: basic and acidic residues. Over residues 457–466 (EKKKKKKEKK) the composition is skewed to basic residues.

Belongs to the pseudouridine synthase TruB family. As to quaternary structure, part of the H/ACA small nucleolar ribonucleoprotein (H/ACA snoRNP) complex. The complex binds a box H/ACA small nucleolar RNA (snoRNA), which may target the specific site of modification within the RNA substrate.

Its subcellular location is the nucleus. It is found in the nucleolus. The protein resides in the cajal body. The enzyme catalyses uridine in 5S rRNA = pseudouridine in 5S rRNA. Catalytic subunit of H/ACA small nucleolar ribonucleoprotein (H/ACA snoRNP) complex, which catalyzes pseudouridylation of rRNA. This involves the isomerization of uridine such that the ribose is subsequently attached to C5, instead of the normal N1. Pseudouridine ('psi') residues may serve to stabilize the conformation of rRNAs. Required for ribosome biogenesis and telomere maintenance. The polypeptide is H/ACA ribonucleoprotein complex subunit DKC1 (Danio rerio (Zebrafish)).